A 392-amino-acid polypeptide reads, in one-letter code: UDP-N-acetylglucosamine--N-acetylmuramyl-(pentapeptide) pyrophosphoryl-undecaprenol N-acetylglucosamine transferase (392 aa).

UDP-N-acetyl-alpha-D-glucosamine is bound by residues 14 to 16 (TGG), asparagine 124, arginine 167, serine 195, isoleucine 251, and glutamine 296.

This sequence belongs to the glycosyltransferase 28 family. MurG subfamily.

It is found in the cell inner membrane. It catalyses the reaction di-trans,octa-cis-undecaprenyl diphospho-N-acetyl-alpha-D-muramoyl-L-alanyl-D-glutamyl-meso-2,6-diaminopimeloyl-D-alanyl-D-alanine + UDP-N-acetyl-alpha-D-glucosamine = di-trans,octa-cis-undecaprenyl diphospho-[N-acetyl-alpha-D-glucosaminyl-(1-&gt;4)]-N-acetyl-alpha-D-muramoyl-L-alanyl-D-glutamyl-meso-2,6-diaminopimeloyl-D-alanyl-D-alanine + UDP + H(+). The protein operates within cell wall biogenesis; peptidoglycan biosynthesis. Cell wall formation. Catalyzes the transfer of a GlcNAc subunit on undecaprenyl-pyrophosphoryl-MurNAc-pentapeptide (lipid intermediate I) to form undecaprenyl-pyrophosphoryl-MurNAc-(pentapeptide)GlcNAc (lipid intermediate II). This chain is UDP-N-acetylglucosamine--N-acetylmuramyl-(pentapeptide) pyrophosphoryl-undecaprenol N-acetylglucosamine transferase, found in Sphingopyxis alaskensis (strain DSM 13593 / LMG 18877 / RB2256) (Sphingomonas alaskensis).